The sequence spans 493 residues: 3-octaprenyl-4-hydroxybenzoate carboxy-lyase (493 aa).

A Mn(2+)-binding site is contributed by asparagine 172. Prenylated FMN-binding positions include 175-177 (IYR), 189-191 (RWL), and 194-195 (RG). Mn(2+) is bound at residue glutamate 238. The active-site Proton donor is the aspartate 287.

The protein belongs to the UbiD family. As to quaternary structure, homohexamer. The cofactor is prenylated FMN. It depends on Mn(2+) as a cofactor.

It localises to the cell membrane. The enzyme catalyses a 4-hydroxy-3-(all-trans-polyprenyl)benzoate + H(+) = a 2-(all-trans-polyprenyl)phenol + CO2. The protein operates within cofactor biosynthesis; ubiquinone biosynthesis. Catalyzes the decarboxylation of 3-octaprenyl-4-hydroxy benzoate to 2-octaprenylphenol, an intermediate step in ubiquinone biosynthesis. The protein is 3-octaprenyl-4-hydroxybenzoate carboxy-lyase of Cellvibrio japonicus (strain Ueda107) (Pseudomonas fluorescens subsp. cellulosa).